The sequence spans 82 residues: DNA-directed RNA polymerase subunit omega (82 aa).

The protein belongs to the RNA polymerase subunit omega family. In cyanobacteria the RNAP catalytic core is composed of 2 alpha, 1 beta, 1 beta', 1 gamma and 1 omega subunit. When a sigma factor is associated with the core the holoenzyme is formed, which can initiate transcription.

It catalyses the reaction RNA(n) + a ribonucleoside 5'-triphosphate = RNA(n+1) + diphosphate. Its function is as follows. Promotes RNA polymerase assembly. Latches the N- and C-terminal regions of the beta' subunit thereby facilitating its interaction with the beta and alpha subunits. The chain is DNA-directed RNA polymerase subunit omega from Synechococcus sp. (strain CC9902).